Here is a 181-residue protein sequence, read N- to C-terminus: Bifunctional protein PyrR (181 aa).

A PRPP-binding motif is present at residues 100–112 (VVLVDDVIYTGRT).

It belongs to the purine/pyrimidine phosphoribosyltransferase family. PyrR subfamily. As to quaternary structure, homodimer and homohexamer; in equilibrium.

It carries out the reaction UMP + diphosphate = 5-phospho-alpha-D-ribose 1-diphosphate + uracil. In terms of biological role, regulates transcriptional attenuation of the pyrimidine nucleotide (pyr) operon by binding in a uridine-dependent manner to specific sites on pyr mRNA. This disrupts an antiterminator hairpin in the RNA and favors formation of a downstream transcription terminator, leading to a reduced expression of downstream genes. Functionally, also displays a weak uracil phosphoribosyltransferase activity which is not physiologically significant. This Pelotomaculum thermopropionicum (strain DSM 13744 / JCM 10971 / SI) protein is Bifunctional protein PyrR.